A 636-amino-acid polypeptide reads, in one-letter code: Topoisomerase I damage affected protein 7 (636 aa).

The segment covering 1–18 (MNSNSTIGRTTLGESDTI) has biased composition (polar residues). 5 disordered regions span residues 1 to 33 (MNSN…NSRS), 87 to 109 (TLVS…QYDP), 246 to 271 (NKDT…SSTN), 299 to 326 (PTSS…DDTT), and 339 to 362 (QSTT…STSP). Asn4 carries N-linked (GlcNAc...) asparagine glycosylation. Low complexity-rich tracts occupy residues 19–33 (SLSF…NSRS) and 87–108 (TLVS…SQYD). Asn257 is a glycosylation site (N-linked (GlcNAc...) asparagine). Residues 457–477 (IVGSVVGSVGGILICVLVVWF) form a helical membrane-spanning segment. N-linked (GlcNAc...) asparagine glycosylation is present at Asn492. Residues 510 to 541 (QAKEASLQAQDSGSQQRNTETASANNPFSNEF) are compositionally biased toward polar residues. A disordered region spans residues 510–551 (QAKEASLQAQDSGSQQRNTETASANNPFSNEFNFKARGNPPP). Residue Lys512 forms a Glycyl lysine isopeptide (Lys-Gly) (interchain with G-Cter in ubiquitin) linkage. Residues Asn557, Asn562, and Asn626 are each glycosylated (N-linked (GlcNAc...) asparagine). A Phosphoserine modification is found at Ser628.

The protein belongs to the TDA7 family.

The protein localises to the vacuole membrane. The chain is Topoisomerase I damage affected protein 7 (TDA7) from Saccharomyces cerevisiae (strain ATCC 204508 / S288c) (Baker's yeast).